We begin with the raw amino-acid sequence, 254 residues long: Zinc import ATP-binding protein ZnuC (254 aa).

Positions 5-221 constitute an ABC transporter domain; that stretch reads ICAADLSVSH…PAYRALFGSE (217 aa). 38-45 contacts ATP; the sequence is GPNGSGKS. A compositionally biased stretch (basic and acidic residues) spans 234 to 245; it reads DHDHDHVAEGHR. The segment at 234–254 is disordered; the sequence is DHDHDHVAEGHRHGPACAHPH.

This sequence belongs to the ABC transporter superfamily. Zinc importer (TC 3.A.1.15.5) family. As to quaternary structure, the complex is composed of two ATP-binding proteins (ZnuC), two transmembrane proteins (ZnuB) and a solute-binding protein (ZnuA).

It localises to the cell inner membrane. The catalysed reaction is Zn(2+)(out) + ATP(in) + H2O(in) = Zn(2+)(in) + ADP(in) + phosphate(in) + H(+)(in). In terms of biological role, part of the ABC transporter complex ZnuABC involved in zinc import. Responsible for energy coupling to the transport system. In Paracoccus denitrificans (strain Pd 1222), this protein is Zinc import ATP-binding protein ZnuC.